The following is a 1270-amino-acid chain: Glycine betaine reductase ATRR (1270 aa).

Positions 14–418 are adenylation (A) domain; sequence FTQQVRASPN…MIKLRGYSVV (405 aa). Positions 528-605 constitute a Carrier domain; sequence KEDPIGIEDI…GHLDTVRAIR (78 aa). S565 carries the O-(pantetheine 4'-phosphoryl)serine modification. The tract at residues 643-937 is carboxylic acid reductase domain R1; the sequence is KTVLLTGVTG…EPLSWDDWVA (295 aa). Positions 1026–1256 are aldehyde reductase domain R2; sequence PLSGKVAVVT…IYALRQPEHV (231 aa).

It belongs to the NRP synthetase family.

Its activity is regulated as follows. The tetramethylammonium ion, which mimics the head group of glycine betaine, acts as a competitive inhibitor of ATRR A domain, whereas the potency decreased by three orders of magnitude with dimethylammonium. Choline is a mixed inhibitor for both glycine betaine reductase and aldehyde reductase activity but more potent in competition against glycine betaine in the first reduction step. Therefore, choline could act as a feedback inhibitor to regulate ATRR enzymatic activity. The lowered binding affinity of choline to R2 favors the release of choline after glycine betaine aldehyde reduction to avoid direct product inhibition. NRPS-like enzyme with an unusual domain architecture that converts back glycine betaine to choline via a 2-step reduction mechanism, and thereby can be an alternative source of choline. Permits direct reutilization of endogenously stored glycine betaine for on-demand biosynthesis of choline and choline derivatives, including phospholipid phosphatidylcholine (PC) which has an essential role in maintaining membrane integrity and functionality, or choline-O-sulfate, a mean for intracellular sulfate storage. Glycine betaine is activated by the adenylation (A) domain, and transferred to the thiolation (T) domain. Movement of the phosphopantetheine arm to the thioester reductase domain R1 then allows thioester reduction by NADPH of glycine betainoyl thioester to glycine betaine aldehyde, which is in turn reduced to choline by the aldehyde reductase domain R2. The chain is Glycine betaine reductase ATRR from Emericella nidulans (strain FGSC A4 / ATCC 38163 / CBS 112.46 / NRRL 194 / M139) (Aspergillus nidulans).